The primary structure comprises 72 residues: Translation initiation factor IF-1 (72 aa).

In terms of domain architecture, S1-like spans 1 to 72 (MAKQDVIELE…TRGRITYRYK (72 aa)).

The protein belongs to the IF-1 family. In terms of assembly, component of the 30S ribosomal translation pre-initiation complex which assembles on the 30S ribosome in the order IF-2 and IF-3, IF-1 and N-formylmethionyl-tRNA(fMet); mRNA recruitment can occur at any time during PIC assembly.

Its subcellular location is the cytoplasm. Its function is as follows. One of the essential components for the initiation of protein synthesis. Stabilizes the binding of IF-2 and IF-3 on the 30S subunit to which N-formylmethionyl-tRNA(fMet) subsequently binds. Helps modulate mRNA selection, yielding the 30S pre-initiation complex (PIC). Upon addition of the 50S ribosomal subunit IF-1, IF-2 and IF-3 are released leaving the mature 70S translation initiation complex. The protein is Translation initiation factor IF-1 of Staphylococcus aureus (strain USA300 / TCH1516).